The following is a 294-amino-acid chain: tRNA-cytidine(32) 2-sulfurtransferase (294 aa).

The PP-loop motif signature appears at 58–63 (SGGKDS). [4Fe-4S] cluster is bound by residues Cys-133, Cys-136, and Cys-224.

The protein belongs to the TtcA family. As to quaternary structure, homodimer. Mg(2+) is required as a cofactor. Requires [4Fe-4S] cluster as cofactor.

The protein resides in the cytoplasm. The enzyme catalyses cytidine(32) in tRNA + S-sulfanyl-L-cysteinyl-[cysteine desulfurase] + AH2 + ATP = 2-thiocytidine(32) in tRNA + L-cysteinyl-[cysteine desulfurase] + A + AMP + diphosphate + H(+). It participates in tRNA modification. Its function is as follows. Catalyzes the ATP-dependent 2-thiolation of cytidine in position 32 of tRNA, to form 2-thiocytidine (s(2)C32). The sulfur atoms are provided by the cysteine/cysteine desulfurase (IscS) system. This is tRNA-cytidine(32) 2-sulfurtransferase from Ruegeria pomeroyi (strain ATCC 700808 / DSM 15171 / DSS-3) (Silicibacter pomeroyi).